A 216-amino-acid chain; its full sequence is Small ribosomal subunit protein uS5 (216 aa).

The segment at 1 to 55 (MDKKLENQKDLLNQDPKVELNSQSVAKNPLNSREVKPIQRRRPLRKNARDKNSKP) is disordered. Positions 20–31 (LNSQSVAKNPLN) are enriched in polar residues. The S5 DRBM domain maps to 57-120 (FEERVIAIHR…KDAQNRLVSV (64 aa)).

This sequence belongs to the universal ribosomal protein uS5 family. As to quaternary structure, part of the 30S ribosomal subunit. Contacts proteins S4 and S8.

Functionally, with S4 and S12 plays an important role in translational accuracy. Located at the back of the 30S subunit body where it stabilizes the conformation of the head with respect to the body. This is Small ribosomal subunit protein uS5 from Mesomycoplasma hyopneumoniae (strain 7448) (Mycoplasma hyopneumoniae).